The following is a 520-amino-acid chain: GMP synthase [glutamine-hydrolyzing] (520 aa).

In terms of domain architecture, Glutamine amidotransferase type-1 spans 9–202 (TILIIDFGSQ…VHRIVGVKPG (194 aa)). The active-site Nucleophile is the Cys86. Residues His176 and Glu178 contribute to the active site. Residues 203 to 395 (WTMGAYREQA…LGLPDSFIGR (193 aa)) enclose the GMPS ATP-PPase domain. Residue 230 to 236 (SGGVDSS) coordinates ATP.

As to quaternary structure, homodimer.

It carries out the reaction XMP + L-glutamine + ATP + H2O = GMP + L-glutamate + AMP + diphosphate + 2 H(+). It participates in purine metabolism; GMP biosynthesis; GMP from XMP (L-Gln route): step 1/1. Its function is as follows. Catalyzes the synthesis of GMP from XMP. This is GMP synthase [glutamine-hydrolyzing] from Brucella melitensis biotype 2 (strain ATCC 23457).